A 553-amino-acid chain; its full sequence is Glycerol kinase 2 (553 aa).

Substrate is bound at residue Thr20. Arg24 lines the ATP pocket. Positions 94, 148, and 259 each coordinate substrate. ATP-binding positions include Thr281, Gly326, and 427-431 (GMTNN). A helical membrane pass occupies residues 526 to 546 (IFSSLPLGFFIVSSMVMLIGA).

It belongs to the FGGY kinase family. Interacts with ARMC12. Interacts with PLD6. As to expression, testis-specific. Expressed in the midpiece of spermatozoa.

The protein resides in the mitochondrion outer membrane. The protein localises to the cytoplasm. The enzyme catalyses glycerol + ATP = sn-glycerol 3-phosphate + ADP + H(+). Its pathway is polyol metabolism; glycerol degradation via glycerol kinase pathway; sn-glycerol 3-phosphate from glycerol: step 1/1. Functionally, key enzyme in the regulation of glycerol uptake and metabolism. Essential for male fertility and sperm mitochondrial sheath formation. Required for proper arrangement of crescent-like mitochondria to form the mitochondrial sheath during spermatogenesis. Can induce mitochondrial clustering through interactions with PLD6 and up-regulation of phosphatidic acid synthesis in the mitochondria. This Homo sapiens (Human) protein is Glycerol kinase 2 (GK2).